A 210-amino-acid polypeptide reads, in one-letter code: Putative polysaccharide-binding protein (210 aa).

The signal sequence occupies residues 1 to 22; sequence MGFLKGTAAALTLLSAAAAASA. CBM1 domains are found at residues 23 to 62, 63 to 105, 125 to 165, and 166 to 210; these read CGVL…AMPG, MMGQ…LANK, CGKE…APPP, and KMGE…PMHP.

The sequence is that of Putative polysaccharide-binding protein from Porphyra purpurea (Red seaweed).